The sequence spans 204 residues: Guanylate kinase (204 aa).

The Guanylate kinase-like domain occupies 1–182 (MLYIISAPSG…ALSDLNTIIC (182 aa)). 7–14 (APSGTGKS) is an ATP binding site.

It belongs to the guanylate kinase family.

The protein localises to the cytoplasm. It carries out the reaction GMP + ATP = GDP + ADP. Essential for recycling GMP and indirectly, cGMP. The polypeptide is Guanylate kinase (Baumannia cicadellinicola subsp. Homalodisca coagulata).